A 389-amino-acid polypeptide reads, in one-letter code: Carbamoyl phosphate synthase small chain (389 aa).

The segment at 1–197 (MMSSPAKAAK…AAKDASIGDD (197 aa)) is CPSase. Residues S51, G249, and G251 each contribute to the L-glutamine site. A Glutamine amidotransferase type-1 domain is found at 201–387 (HVVCMDFGMK…QEQLNEKCGV (187 aa)). The Nucleophile role is filled by C276. Residues L277, Q280, N318, G320, and F321 each coordinate L-glutamine. Active-site residues include H360 and E362.

The protein belongs to the CarA family. In terms of assembly, composed of two chains; the small (or glutamine) chain promotes the hydrolysis of glutamine to ammonia, which is used by the large (or ammonia) chain to synthesize carbamoyl phosphate. Tetramer of heterodimers (alpha,beta)4.

The enzyme catalyses hydrogencarbonate + L-glutamine + 2 ATP + H2O = carbamoyl phosphate + L-glutamate + 2 ADP + phosphate + 2 H(+). The catalysed reaction is L-glutamine + H2O = L-glutamate + NH4(+). The protein operates within amino-acid biosynthesis; L-arginine biosynthesis; carbamoyl phosphate from bicarbonate: step 1/1. It functions in the pathway pyrimidine metabolism; UMP biosynthesis via de novo pathway; (S)-dihydroorotate from bicarbonate: step 1/3. Its function is as follows. Small subunit of the glutamine-dependent carbamoyl phosphate synthetase (CPSase). CPSase catalyzes the formation of carbamoyl phosphate from the ammonia moiety of glutamine, carbonate, and phosphate donated by ATP, constituting the first step of 2 biosynthetic pathways, one leading to arginine and/or urea and the other to pyrimidine nucleotides. The small subunit (glutamine amidotransferase) binds and cleaves glutamine to supply the large subunit with the substrate ammonia. The sequence is that of Carbamoyl phosphate synthase small chain from Rhodopirellula baltica (strain DSM 10527 / NCIMB 13988 / SH1).